We begin with the raw amino-acid sequence, 251 residues long: 5'-nucleotidase SurE (251 aa).

The a divalent metal cation site is built by Asp-8, Asp-9, Ser-40, and Asn-95.

The protein belongs to the SurE nucleotidase family. A divalent metal cation serves as cofactor.

The protein resides in the cytoplasm. It catalyses the reaction a ribonucleoside 5'-phosphate + H2O = a ribonucleoside + phosphate. In terms of biological role, nucleotidase that shows phosphatase activity on nucleoside 5'-monophosphates. In Desulfitobacterium hafniense (strain DSM 10664 / DCB-2), this protein is 5'-nucleotidase SurE.